The chain runs to 824 residues: Type IV secretion system protein PtlC (824 aa).

456–463 (GQSGSGKT) is a binding site for ATP.

This sequence belongs to the TrbE/VirB4 family.

It localises to the cell membrane. In terms of biological role, component of the type IV secretion system ptl essential for secretion of assembled pertussis toxin (PTX) through the outer membrane. In Bordetella pertussis (strain Tohama I / ATCC BAA-589 / NCTC 13251), this protein is Type IV secretion system protein PtlC (ptlC).